Reading from the N-terminus, the 461-residue chain is Photosystem II CP43 reaction center protein (461 aa).

A propeptide spanning residues 1–2 (ME) is cleaved from the precursor. Thr3 carries the N-acetylthreonine modification. Position 3 is a phosphothreonine (Thr3). 5 consecutive transmembrane segments (helical) span residues 57 to 81 (LFEVAHFVPEKPMYEQGLILLPHLA), 122 to 143 (LIGPETLEESFPFFGYVWKDKN), 166 to 188 (KAMYFGGVYDTWAPGGGDVRIIT), 243 to 263 (TPWPWARRAFVWSGEAYLSYS), and 279 to 300 (WFNNTAYPSEFYGPTGPEASQS). Residue Glu355 participates in [CaMn4O5] cluster binding. Residues 435 to 459 (RARAAAAGFEKGIDRLDEPVLSMRP) traverse the membrane as a helical segment.

Belongs to the PsbB/PsbC family. PsbC subfamily. As to quaternary structure, PSII is composed of 1 copy each of membrane proteins PsbA, PsbB, PsbC, PsbD, PsbE, PsbF, PsbH, PsbI, PsbJ, PsbK, PsbL, PsbM, PsbT, PsbX, PsbY, PsbZ, Psb30/Ycf12, at least 3 peripheral proteins of the oxygen-evolving complex and a large number of cofactors. It forms dimeric complexes. Binds multiple chlorophylls and provides some of the ligands for the Ca-4Mn-5O cluster of the oxygen-evolving complex. It may also provide a ligand for a Cl- that is required for oxygen evolution. PSII binds additional chlorophylls, carotenoids and specific lipids. serves as cofactor.

It localises to the plastid. Its subcellular location is the chloroplast thylakoid membrane. Its function is as follows. One of the components of the core complex of photosystem II (PSII). It binds chlorophyll and helps catalyze the primary light-induced photochemical processes of PSII. PSII is a light-driven water:plastoquinone oxidoreductase, using light energy to abstract electrons from H(2)O, generating O(2) and a proton gradient subsequently used for ATP formation. The sequence is that of Photosystem II CP43 reaction center protein from Tetradesmus obliquus (Green alga).